Consider the following 72-residue polypeptide: UPF0154 protein YneF (72 aa).

The helical transmembrane segment at W4 to I24 threads the bilayer.

The protein belongs to the UPF0154 family.

It is found in the membrane. In Bacillus subtilis (strain 168), this protein is UPF0154 protein YneF (yneF).